We begin with the raw amino-acid sequence, 218 residues long: Octanoyltransferase (218 aa).

The BPL/LPL catalytic domain maps to 31–206 (REAADEVWLV…QLVKHLDYAE (176 aa)). Substrate is bound by residues 70 to 77 (RGGQVTYH), 137 to 139 (SLG), and 150 to 152 (GLA). The Acyl-thioester intermediate role is filled by cysteine 168.

This sequence belongs to the LipB family.

The protein localises to the cytoplasm. It catalyses the reaction octanoyl-[ACP] + L-lysyl-[protein] = N(6)-octanoyl-L-lysyl-[protein] + holo-[ACP] + H(+). It participates in protein modification; protein lipoylation via endogenous pathway; protein N(6)-(lipoyl)lysine from octanoyl-[acyl-carrier-protein]: step 1/2. Its function is as follows. Catalyzes the transfer of endogenously produced octanoic acid from octanoyl-acyl-carrier-protein onto the lipoyl domains of lipoate-dependent enzymes. Lipoyl-ACP can also act as a substrate although octanoyl-ACP is likely to be the physiological substrate. This chain is Octanoyltransferase, found in Pseudomonas syringae pv. syringae (strain B728a).